The chain runs to 451 residues: UDP-N-acetylmuramoylalanine--D-glutamate ligase (451 aa).

Residue 119-125 coordinates ATP; that stretch reads GSNGKTT.

It belongs to the MurCDEF family.

Its subcellular location is the cytoplasm. The enzyme catalyses UDP-N-acetyl-alpha-D-muramoyl-L-alanine + D-glutamate + ATP = UDP-N-acetyl-alpha-D-muramoyl-L-alanyl-D-glutamate + ADP + phosphate + H(+). Its pathway is cell wall biogenesis; peptidoglycan biosynthesis. Functionally, cell wall formation. Catalyzes the addition of glutamate to the nucleotide precursor UDP-N-acetylmuramoyl-L-alanine (UMA). The polypeptide is UDP-N-acetylmuramoylalanine--D-glutamate ligase (Streptococcus agalactiae serotype III (strain NEM316)).